The sequence spans 575 residues: Alpha-(1,6)-fucosyltransferase (575 aa).

The Cytoplasmic segment spans residues 1-9 (MRAWTGSWR). Residues 10 to 30 (WIMLILFAWGTLLFYIGGHLV) form a helical; Signal-anchor for type II membrane protein membrane-spanning segment. The Lumenal segment spans residues 31-575 (RDNDHPDHSS…KYPTYPEAEK (545 aa)). 3 cysteine pairs are disulfide-bonded: Cys204–Cys266, Cys212–Cys230, and Cys218–Cys222. One can recognise a GT23 domain in the interval 206 to 493 (KARKLVCNIN…PDASANFHSL (288 aa)). Residue Ser278 is modified to Phosphoserine. Positions 299–305 (PRPPYLP) match the SH3-binding motif. An important for donor substrate binding region spans residues 365-366 (RR). A disulfide bridge links Cys465 with Cys472. Positions 502-563 (QNAHNQIAVY…PSYKVREKIE (62 aa)) constitute an SH3 domain.

Belongs to the glycosyltransferase 23 family. Tyrosine phosphorylated by PKDCC/VLK.

It localises to the golgi apparatus. The protein localises to the golgi stack membrane. It carries out the reaction N(4)-{beta-D-GlcNAc-(1-&gt;2)-alpha-D-Man-(1-&gt;3)-[beta-D-GlcNAc-(1-&gt;2)-alpha-D-Man-(1-&gt;6)]-beta-D-Man-(1-&gt;4)-beta-D-GlcNAc-(1-&gt;4)-beta-D-GlcNAc}-L-asparaginyl-[protein] + GDP-beta-L-fucose = an N(4)-{beta-D-GlcNAc-(1-&gt;2)-alpha-D-Man-(1-&gt;3)-[beta-D-GlcNAc-(1-&gt;2)-alpha-D-Man-(1-&gt;6)]-beta-D-Man-(1-&gt;4)-beta-D-GlcNAc-(1-&gt;4)-[alpha-L-Fuc-(1-&gt;6)]-beta-D-GlcNAc}-L-asparaginyl-[protein] + GDP + H(+). The protein operates within protein modification; protein glycosylation. Its function is as follows. Catalyzes the addition of fucose in alpha 1-6 linkage to the first GlcNAc residue, next to the peptide chains in N-glycans. The polypeptide is Alpha-(1,6)-fucosyltransferase (Fut8) (Mus musculus (Mouse)).